Here is a 177-residue protein sequence, read N- to C-terminus: Large ribosomal subunit protein uL6 (177 aa).

This sequence belongs to the universal ribosomal protein uL6 family. Part of the 50S ribosomal subunit.

This protein binds to the 23S rRNA, and is important in its secondary structure. It is located near the subunit interface in the base of the L7/L12 stalk, and near the tRNA binding site of the peptidyltransferase center. This Dichelobacter nodosus (strain VCS1703A) protein is Large ribosomal subunit protein uL6.